The chain runs to 141 residues: Large ribosomal subunit protein uL11 (141 aa).

Belongs to the universal ribosomal protein uL11 family. In terms of assembly, part of the ribosomal stalk of the 50S ribosomal subunit. Interacts with L10 and the large rRNA to form the base of the stalk. L10 forms an elongated spine to which L12 dimers bind in a sequential fashion forming a multimeric L10(L12)X complex. One or more lysine residues are methylated.

Functionally, forms part of the ribosomal stalk which helps the ribosome interact with GTP-bound translation factors. The polypeptide is Large ribosomal subunit protein uL11 (Thermotoga sp. (strain RQ2)).